Here is a 381-residue protein sequence, read N- to C-terminus: Queuine tRNA-ribosyltransferase (381 aa).

Aspartate 92 acts as the Proton acceptor in catalysis. Residues 92–96, aspartate 146, glutamine 190, and glycine 217 contribute to the substrate site; that span reads DSGGF. The RNA binding stretch occupies residues 248 to 254; sequence GVGRPED. The active-site Nucleophile is the aspartate 267. The segment at 272 to 276 is RNA binding; important for wobble base 34 recognition; it reads TRNAR. Residues cysteine 305, cysteine 307, cysteine 310, and histidine 337 each coordinate Zn(2+).

The protein belongs to the queuine tRNA-ribosyltransferase family. As to quaternary structure, homodimer. Within each dimer, one monomer is responsible for RNA recognition and catalysis, while the other monomer binds to the replacement base PreQ1. Zn(2+) is required as a cofactor.

The catalysed reaction is 7-aminomethyl-7-carbaguanine + guanosine(34) in tRNA = 7-aminomethyl-7-carbaguanosine(34) in tRNA + guanine. It participates in tRNA modification; tRNA-queuosine biosynthesis. Catalyzes the base-exchange of a guanine (G) residue with the queuine precursor 7-aminomethyl-7-deazaguanine (PreQ1) at position 34 (anticodon wobble position) in tRNAs with GU(N) anticodons (tRNA-Asp, -Asn, -His and -Tyr). Catalysis occurs through a double-displacement mechanism. The nucleophile active site attacks the C1' of nucleotide 34 to detach the guanine base from the RNA, forming a covalent enzyme-RNA intermediate. The proton acceptor active site deprotonates the incoming PreQ1, allowing a nucleophilic attack on the C1' of the ribose to form the product. After dissociation, two additional enzymatic reactions on the tRNA convert PreQ1 to queuine (Q), resulting in the hypermodified nucleoside queuosine (7-(((4,5-cis-dihydroxy-2-cyclopenten-1-yl)amino)methyl)-7-deazaguanosine). The sequence is that of Queuine tRNA-ribosyltransferase from Xanthomonas oryzae pv. oryzae (strain MAFF 311018).